Consider the following 552-residue polypeptide: CTP synthase (552 aa).

The interval 1–265 (MTKFVFVTGG…DRIVCEKLAL (265 aa)) is amidoligase domain. Residue Ser-13 participates in CTP binding. Ser-13 is a UTP binding site. ATP is bound by residues 14–19 (SLGKGI) and Asp-71. Mg(2+)-binding residues include Asp-71 and Glu-139. CTP is bound by residues 146 to 148 (DIE), 186 to 191 (KTKPTQ), and Lys-222. UTP-binding positions include 186–191 (KTKPTQ) and Lys-222. The region spanning 290-545 (TIGMVGKYVD…IKAALAHKQA (256 aa)) is the Glutamine amidotransferase type-1 domain. Gly-351 contributes to the L-glutamine binding site. Cys-378 (nucleophile; for glutamine hydrolysis) is an active-site residue. Residues 379 to 382 (LGMQ), Glu-402, and Arg-468 each bind L-glutamine. Active-site residues include His-518 and Glu-520.

It belongs to the CTP synthase family. In terms of assembly, homotetramer.

The enzyme catalyses UTP + L-glutamine + ATP + H2O = CTP + L-glutamate + ADP + phosphate + 2 H(+). It carries out the reaction L-glutamine + H2O = L-glutamate + NH4(+). It catalyses the reaction UTP + NH4(+) + ATP = CTP + ADP + phosphate + 2 H(+). The protein operates within pyrimidine metabolism; CTP biosynthesis via de novo pathway; CTP from UDP: step 2/2. Its activity is regulated as follows. Allosterically activated by GTP, when glutamine is the substrate; GTP has no effect on the reaction when ammonia is the substrate. The allosteric effector GTP functions by stabilizing the protein conformation that binds the tetrahedral intermediate(s) formed during glutamine hydrolysis. Inhibited by the product CTP, via allosteric rather than competitive inhibition. Its function is as follows. Catalyzes the ATP-dependent amination of UTP to CTP with either L-glutamine or ammonia as the source of nitrogen. Regulates intracellular CTP levels through interactions with the four ribonucleotide triphosphates. The polypeptide is CTP synthase (Herminiimonas arsenicoxydans).